A 639-amino-acid chain; its full sequence is 1-deoxy-D-xylulose-5-phosphate synthase (639 aa).

Residues His79 and 120–122 each bind thiamine diphosphate; that span reads AHS. A Mg(2+)-binding site is contributed by Asp151. Thiamine diphosphate is bound by residues 152–153, Asn180, Tyr289, and Glu371; that span reads GA. Asn180 provides a ligand contact to Mg(2+).

It belongs to the transketolase family. DXPS subfamily. In terms of assembly, homodimer. Mg(2+) is required as a cofactor. Thiamine diphosphate serves as cofactor.

The catalysed reaction is D-glyceraldehyde 3-phosphate + pyruvate + H(+) = 1-deoxy-D-xylulose 5-phosphate + CO2. The protein operates within metabolic intermediate biosynthesis; 1-deoxy-D-xylulose 5-phosphate biosynthesis; 1-deoxy-D-xylulose 5-phosphate from D-glyceraldehyde 3-phosphate and pyruvate: step 1/1. In terms of biological role, catalyzes the acyloin condensation reaction between C atoms 2 and 3 of pyruvate and glyceraldehyde 3-phosphate to yield 1-deoxy-D-xylulose-5-phosphate (DXP). This is 1-deoxy-D-xylulose-5-phosphate synthase from Rhizorhabdus wittichii (strain DSM 6014 / CCUG 31198 / JCM 15750 / NBRC 105917 / EY 4224 / RW1) (Sphingomonas wittichii).